The chain runs to 437 residues: Aspartate aminotransferase, mitochondrial (437 aa).

3 residues coordinate L-aspartate: Gly-72, Trp-167, and Asn-220. Lys-284 is subject to N6-(pyridoxal phosphate)lysine. Residue Arg-413 participates in L-aspartate binding.

This sequence belongs to the class-I pyridoxal-phosphate-dependent aminotransferase family. Homodimer. It depends on pyridoxal 5'-phosphate as a cofactor.

The protein resides in the mitochondrion matrix. It carries out the reaction L-aspartate + 2-oxoglutarate = oxaloacetate + L-glutamate. Functionally, plays a key role in amino acid metabolism. Important for metabolite exchange between mitochondria and cytosol. This chain is Aspartate aminotransferase, mitochondrial, found in Schizosaccharomyces pombe (strain 972 / ATCC 24843) (Fission yeast).